A 477-amino-acid polypeptide reads, in one-letter code: UDP-N-acetylmuramate--L-alanine ligase (477 aa).

125–131 contacts ATP; that stretch reads GTHGKTT.

Belongs to the MurCDEF family.

It localises to the cytoplasm. It carries out the reaction UDP-N-acetyl-alpha-D-muramate + L-alanine + ATP = UDP-N-acetyl-alpha-D-muramoyl-L-alanine + ADP + phosphate + H(+). It functions in the pathway cell wall biogenesis; peptidoglycan biosynthesis. Functionally, cell wall formation. This is UDP-N-acetylmuramate--L-alanine ligase from Acidothermus cellulolyticus (strain ATCC 43068 / DSM 8971 / 11B).